The primary structure comprises 302 residues: Aspartate carbamoyltransferase catalytic subunit (302 aa).

The carbamoyl phosphate site is built by arginine 49 and threonine 50. Lysine 77 is a binding site for L-aspartate. Carbamoyl phosphate contacts are provided by arginine 99, histidine 126, and glutamine 129. L-aspartate-binding residues include arginine 159 and arginine 209. Positions 250 and 251 each coordinate carbamoyl phosphate.

Belongs to the aspartate/ornithine carbamoyltransferase superfamily. ATCase family. As to quaternary structure, heterododecamer (2C3:3R2) of six catalytic PyrB chains organized as two trimers (C3), and six regulatory PyrI chains organized as three dimers (R2).

The enzyme catalyses carbamoyl phosphate + L-aspartate = N-carbamoyl-L-aspartate + phosphate + H(+). It participates in pyrimidine metabolism; UMP biosynthesis via de novo pathway; (S)-dihydroorotate from bicarbonate: step 2/3. Catalyzes the condensation of carbamoyl phosphate and aspartate to form carbamoyl aspartate and inorganic phosphate, the committed step in the de novo pyrimidine nucleotide biosynthesis pathway. The sequence is that of Aspartate carbamoyltransferase catalytic subunit from Staphylococcus carnosus (strain TM300).